Here is a 470-residue protein sequence, read N- to C-terminus: Desmin (470 aa).

Residues 2–108 form a head region; it reads SQAYSSSQRV…QEFLTTRTNE (107 aa). Phosphoserine; by CDK1 is present on Ser7. Ser12 is subject to Phosphoserine; by AURKB. Position 16 is an omega-N-methylarginine (Arg16). A Phosphothreonine; by AURKB and ROCK1 modification is found at Thr17. Ser28 is modified (phosphoserine; by CDK1). Ser31 carries the phosphoserine modification. A Phosphoserine; by CDK1 modification is found at Ser32. Arg37 carries the post-translational modification Asymmetric dimethylarginine; alternate. Omega-N-methylarginine; alternate is present on Arg37. Ser45 is modified (phosphoserine). Position 58 is an ADP-ribosylarginine (Arg58). Ser60 carries the post-translational modification Phosphoserine; by AURKB. Arg70 carries the post-translational modification Omega-N-methylarginine. At Thr77 the chain carries Phosphothreonine; by ROCK1. A Phosphoserine modification is found at Ser81. The 309-residue stretch at 108–416 folds into the IF rod domain; sequence EKVELQELND…KLLEGEESRI (309 aa). The segment at 109 to 141 is coil 1A; sequence KVELQELNDRFANYIEKVRFLEQQNAALAAEVN. Residues 142 to 151 form a linker 1 region; sequence RLKGREPTRV. The coil 1B stretch occupies residues 152–252; the sequence is AEIYEEELRE…HEEEIRELQA (101 aa). The linker 12 stretch occupies residues 253–268; sequence QLQEQQVQVEMDMSKP. The tract at residues 268–415 is interaction with NEB; the sequence is PDLTAALRDI…RKLLEGEESR (148 aa). The coil 2A stretch occupies residues 269 to 287; that stretch reads DLTAALRDIRAQYETIAAK. A linker 2 region spans residues 288 to 295; sequence NISEAEEW. 4 positions are modified to phosphoserine: Ser290, Ser358, Ser361, and Ser424. A coil 2B region spans residues 296-412; sequence YKSKVSDLTQ…ATYRKLLEGE (117 aa). A tail region spans residues 413–470; the sequence is ESRINLPIQTFSALNFRETSPEQRGSEVHTKKTVMIKTIETRDGEVVSEATQQQHEVL. The segment at 438–453 is interaction with CRYAB; that stretch reads SEVHTKKTVMIKTIET.

Belongs to the intermediate filament family. As to quaternary structure, homomer. Interacts with DST. Interacts with MTM1. Interacts with EPPK1; interaction is dependent of higher-order structure of intermediate filament. Interacts with CRYAB. Interacts with NEB (via nebulin repeats 160-164). Interacts (via rod region) with NEBL (via nebulin repeats 1-5). Interacts with ASB2; the interaction targets DES for proteasomal degradation. Interacts with PKP1. Interacts with FLII. Post-translationally, ADP-ribosylation prevents ability to form intermediate filaments. Phosphorylation at Ser-7, Ser-28 and Ser-32 by CDK1 and phosphorylation at Ser-60 by AURKB contribute to efficient separation of desmin intermediate filaments during mitosis. In terms of processing, ubiquitination by a SCF-like complex containing ASB2 leads to proteasomal degradation.

The protein resides in the cytoplasm. It localises to the myofibril. The protein localises to the sarcomere. Its subcellular location is the z line. It is found in the cell membrane. The protein resides in the sarcolemma. It localises to the nucleus. The protein localises to the cell tip. Its subcellular location is the nucleus envelope. Functionally, muscle-specific type III intermediate filament essential for proper muscular structure and function. Plays a crucial role in maintaining the structure of sarcomeres, inter-connecting the Z-disks and forming the myofibrils, linking them not only to the sarcolemmal cytoskeleton, but also to the nucleus and mitochondria, thus providing strength for the muscle fiber during activity. In adult striated muscle they form a fibrous network connecting myofibrils to each other and to the plasma membrane from the periphery of the Z-line structures. May act as a sarcomeric microtubule-anchoring protein: specifically associates with detyrosinated tubulin-alpha chains, leading to buckled microtubules and mechanical resistance to contraction. Required for nuclear membrane integrity, via anchoring at the cell tip and nuclear envelope, resulting in maintenance of microtubule-derived intracellular mechanical forces. Contributes to the transcriptional regulation of the NKX2-5 gene in cardiac progenitor cells during a short period of cardiomyogenesis and in cardiac side population stem cells in the adult. Plays a role in maintaining an optimal conformation of nebulette (NEB) on heart muscle sarcomeres to bind and recruit cardiac alpha-actin. The protein is Desmin (DES) of Bos taurus (Bovine).